We begin with the raw amino-acid sequence, 28 residues long: Short cationic peptide-1a (28 aa).

Glu-28 carries the glutamic acid 1-amide modification.

In terms of tissue distribution, expressed by the venom gland.

The protein localises to the secreted. This Cupiennius salei (American wandering spider) protein is Short cationic peptide-1a.